Consider the following 217-residue polypeptide: Putative thymidylate synthase (217 aa).

The active site involves Cys-139.

The protein belongs to the thymidylate synthase family. Archaeal-type ThyA subfamily. Monomer.

The protein resides in the cytoplasm. It functions in the pathway pyrimidine metabolism; dTTP biosynthesis. In terms of biological role, may catalyze the biosynthesis of dTMP using an unknown cosubstrate. In Methanosarcina acetivorans (strain ATCC 35395 / DSM 2834 / JCM 12185 / C2A), this protein is Putative thymidylate synthase.